A 204-amino-acid chain; its full sequence is Ricin B-like lectin R40G3 (204 aa).

The Ricin B-type lectin domain maps to 54 to 200 (TVKVYCRANP…CEGDNQRWKI (147 aa)).

As to expression, expressed in shoots and lamina.

In terms of biological role, lectin which binds carbohydrates in vitro. Interacts through its lectin domain with glycan structures containing specific motifs. The chain is Ricin B-like lectin R40G3 from Oryza sativa subsp. japonica (Rice).